The sequence spans 246 residues: Probable phosphatase Tola_0828 (246 aa).

The Zn(2+) site is built by H8, H10, H16, H41, E74, H102, H132, D193, and H195.

Belongs to the PHP family. Zn(2+) serves as cofactor.

This chain is Probable phosphatase Tola_0828, found in Tolumonas auensis (strain DSM 9187 / NBRC 110442 / TA 4).